The sequence spans 356 residues: MSLLSDLINLNLSDTTEKIIAEYIWIGGSGLDLRSKARTLPGPVSDPSKLPKWNYDGSSTGQAPGEDSEVIIYPQAIFKDPFRRGNNILVMCDAYTPAGEPIPTNKRHNAAKIFSHPDVVAEEPWYGIEQEYTLLQKDVNWPLGWPVGGFPGPQGPYYCGAGADKAFGRDIVDAHYKACLYAGINISGINGEVMPGQWEFQVGPAVGISAGDELWVARYILERITEIAGVVLSFDPKPIKGDWNGAGAHTNYSTKTMRNDGGYEVIKSAIEKLGKRHKEHIAAYGEGNERRLTGRHETADINTFLWGVANRGASIRVGRDTEKAGKGYFEDRRPASNMDPYVVTSMIADTTILWKP.

Positions 19–99 (IIAEYIWIGG…VMCDAYTPAG (81 aa)) constitute a GS beta-grasp domain. Residues 41 to 66 (PGPVSDPSKLPKWNYDGSSTGQAPGE) are disordered. One can recognise a GS catalytic domain in the interval 106–356 (KRHNAAKIFS…IADTTILWKP (251 aa)).

This sequence belongs to the glutamine synthetase family. As to quaternary structure, homooctamer.

It is found in the cytoplasm. It carries out the reaction L-glutamate + NH4(+) + ATP = L-glutamine + ADP + phosphate + H(+). This chain is Glutamine synthetase nodule isozyme, found in Vigna aconitifolia (Moth bean).